Reading from the N-terminus, the 612-residue chain is Oligopeptide transport ATP-binding protein OppD (612 aa).

In terms of domain architecture, ABC transporter 1 spans 5–255; that stretch reads LEVTDLAVTF…RRMPYTVGLL (251 aa). The ATP site is built by serine 43, glycine 44, serine 45, glycine 46, lysine 47, serine 48, alanine 49, tyrosine 61, glutamine 96, arginine 147, glycine 158, glutamate 159, and histidine 213. [4Fe-4S] cluster is bound by residues cysteine 286, cysteine 292, cysteine 299, and cysteine 317. The ABC transporter 2 domain maps to 350–600; it reads VRVRHLVKTY…PKHEYTRRLL (251 aa). Positions 396, 397, 398, 399, 400, 401, 402, 445, 495, 499, 503, and 558 each coordinate ATP.

The protein belongs to the ABC transporter superfamily. In terms of assembly, the complex is composed of an ATP-binding protein (OppD), two transmembrane proteins (OppB and OppC) and a solute-binding protein (OppA).

It is found in the cell inner membrane. The catalysed reaction is a [peptide](out) + ATP + H2O = a [peptide](in) + ADP + phosphate + H(+). In terms of biological role, part of the ABC transporter complex OppABCD involved in the uptake of oligopeptides. Responsible for energy coupling to the transport system. In Mycobacterium bovis (strain ATCC BAA-935 / AF2122/97), this protein is Oligopeptide transport ATP-binding protein OppD.